The following is a 308-amino-acid chain: Ribosomal RNA small subunit methyltransferase H (308 aa).

Residues 32 to 34 (GGH), aspartate 51, phenylalanine 78, aspartate 99, and glutamine 106 each bind S-adenosyl-L-methionine.

Belongs to the methyltransferase superfamily. RsmH family.

Its subcellular location is the cytoplasm. It catalyses the reaction cytidine(1402) in 16S rRNA + S-adenosyl-L-methionine = N(4)-methylcytidine(1402) in 16S rRNA + S-adenosyl-L-homocysteine + H(+). In terms of biological role, specifically methylates the N4 position of cytidine in position 1402 (C1402) of 16S rRNA. This Campylobacter curvus (strain 525.92) protein is Ribosomal RNA small subunit methyltransferase H.